The following is a 172-amino-acid chain: Putative Dresden prostate carcinoma protein 2 (172 aa).

Positions 40–61 (QCEEEEAMTPRPTKARAPLPSA) are disordered.

As to expression, very high expression in prostate and prostate cancer. Faint expression in other tissues.

In Homo sapiens (Human), this protein is Putative Dresden prostate carcinoma protein 2 (HMGN2P46).